Reading from the N-terminus, the 948-residue chain is UvrABC system protein A (948 aa).

Position 42–49 (42–49 (GLSGSGKS)) interacts with ATP. Residues 262–289 (CPVCSYSLPELEPRLFSFNNPMGSCPTC) form a C4-type zinc finger. ABC transporter domains are found at residues 319–596 (WDKR…ENSV) and 616–945 (VNPG…KYLK). 649–656 (GVSGSGKS) provides a ligand contact to ATP. The C4-type zinc finger occupies 748–774 (CEACQGDGVIKVEMHFLPDVYVPCEVC).

This sequence belongs to the ABC transporter superfamily. UvrA family. Forms a heterotetramer with UvrB during the search for lesions.

The protein localises to the cytoplasm. Functionally, the UvrABC repair system catalyzes the recognition and processing of DNA lesions. UvrA is an ATPase and a DNA-binding protein. A damage recognition complex composed of 2 UvrA and 2 UvrB subunits scans DNA for abnormalities. When the presence of a lesion has been verified by UvrB, the UvrA molecules dissociate. The sequence is that of UvrABC system protein A from Neisseria meningitidis serogroup A / serotype 4A (strain DSM 15465 / Z2491).